Reading from the N-terminus, the 390-residue chain is Bibenzyl synthase (390 aa).

Cys164 is an active-site residue.

The protein belongs to the thiolase-like superfamily. Chalcone/stilbene synthases family.

It catalyses the reaction 3-(3-hydroxyphenyl)-propanoyl-CoA + 3 malonyl-CoA + 3 H(+) = 3,3',5-trihydroxybibenzyl + 4 CO2 + 4 CoA. This Phalaenopsis sp. (Moth orchid) protein is Bibenzyl synthase (BIBSY212).